A 609-amino-acid polypeptide reads, in one-letter code: PTS system beta-glucoside-specific EIIBCA component (609 aa).

The region spanning 1–86 is the PTS EIIB type-1 domain; it reads MDYDKLSKDI…VRHSNLSDEK (86 aa). The active-site Phosphocysteine intermediate; for EIIB activity is cysteine 26. The PTS EIIC type-1 domain maps to 103–459; the sequence is DVISGVFTPI…GSQQPAVHEG (357 aa). Transmembrane regions (helical) follow at residues 112 to 132, 141 to 161, 174 to 194, 202 to 222, 246 to 266, 281 to 301, 321 to 341, 351 to 371, 379 to 399, and 412 to 432; these read ILPA…AVTF, VHVI…LLLA, VAAA…LGAG, LPVT…SIWI, FTLL…GAIL, AGLV…MTGM, LLPA…AVFL, LALT…MYGV, FAAA…TGVA, and IPVF…IAFA. The PTS EIIA type-1 domain occupies 480–584; it reads DGVFSAGVMG…DVITPVIVTN (105 aa). The Tele-phosphohistidine intermediate; for EIIA activity role is filled by histidine 532.

It is found in the cell membrane. In terms of biological role, the phosphoenolpyruvate-dependent sugar phosphotransferase system (sugar PTS), a major carbohydrate active -transport system, catalyzes the phosphorylation of incoming sugar substrates concomitantly with their translocation across the cell membrane. This system is involved in beta-glucoside transport. The sequence is that of PTS system beta-glucoside-specific EIIBCA component (bglP) from Bacillus subtilis (strain 168).